We begin with the raw amino-acid sequence, 128 residues long: Fluoride-specific ion channel FluC (128 aa).

4 helical membrane passes run 4-24 (VMGI…RYAI), 37-57 (FGTF…WSFF), 65-85 (TFRL…STFS), and 101-121 (FGYL…GFFI). Na(+) contacts are provided by Gly76 and Thr79.

It belongs to the fluoride channel Fluc/FEX (TC 1.A.43) family.

The protein localises to the cell inner membrane. It carries out the reaction fluoride(in) = fluoride(out). Its activity is regulated as follows. Na(+) is not transported, but it plays an essential structural role and its presence is essential for fluoride channel function. In terms of biological role, fluoride-specific ion channel. Important for reducing fluoride concentration in the cell, thus reducing its toxicity. The protein is Fluoride-specific ion channel FluC of Desulfotalea psychrophila (strain LSv54 / DSM 12343).